A 548-amino-acid chain; its full sequence is MKKINPTQTSAWKALQQHFKEIEPIHIRHLFHADPKRSEKFSLTFNDLIRVDFSKNRLTAQTIEKLQALAQETDLALAICSMFSGGKINETEERPVLHIALRNRGNQPILVDGQDVMPLVNAVLEKMKRFCHQVIKGDWNGYSGQTITDVVNIGIGGSDLGPYMATEALKPYKNHLKMHFVSNVDGTDIVETLKALNPARTLFIVASKTFTTQETMTNAQTAREWFLKTAGDSAHVARHFVALSTNIKEVTNFGIDPENSFEFWDWVGGRYSLWSAIGLPIALSIGFDNFEKLLEGAYEMDQHFLKTDFTHNIPVILALIGIWYSHFFGAETEAVLPYDQYLHRFPAYLQQASMESNGKWVDRDGKPVGYQTGSILWGEPGTNGQHAFYQLIHQGTKIIPCDFIAPVISHNAIGDHHHKLLANFFAQTQALAFGKTEQEVQEELMAEGVFSEKATYLAPFKAFSGNRPTNSILLKQITPLSLGALIALYEHKIFTQGVILNIFSFDQWGVELGKKLASGILSELEGPEKVSCHDSSTNSLINCFKKWH.

The active-site Proton donor is the E355. Active-site residues include H386 and K514.

Belongs to the GPI family.

The protein localises to the cytoplasm. It catalyses the reaction alpha-D-glucose 6-phosphate = beta-D-fructose 6-phosphate. It functions in the pathway carbohydrate biosynthesis; gluconeogenesis. It participates in carbohydrate degradation; glycolysis; D-glyceraldehyde 3-phosphate and glycerone phosphate from D-glucose: step 2/4. Its function is as follows. Catalyzes the reversible isomerization of glucose-6-phosphate to fructose-6-phosphate. The protein is Glucose-6-phosphate isomerase of Hamiltonella defensa subsp. Acyrthosiphon pisum (strain 5AT).